The sequence spans 223 residues: Transmembrane protein 126 (223 aa).

Over 1–39 (MALSRAKPDELPRDAVVITEDQALKYQWKIITSWDKIGE) the chain is Mitochondrial matrix. Residues 40–62 (VWSLRYTPGILSALAAGTGAYIN) form a helical membrane-spanning segment. Residues 63–78 (NHYRTKLRLGGHGRLS) lie on the Mitochondrial intermembrane side of the membrane. The helical transmembrane segment at 79–99 (TYLPIVAVPAIFTMLAHKFFI) threads the bilayer. The Mitochondrial matrix portion of the chain corresponds to 100–123 (QRPILLNPLGECPVCIQMRSAAFQ). The chain crosses the membrane as a helical span at residues 124–144 (TSLGIVYPTILAPFAAFLFAT). At 145-171 (RCYTYRIPSITENPREVFLLWRKFTRP) the chain is on the mitochondrial intermembrane side. The helical transmembrane segment at 172-192 (IVPALGTLIGLQALLTMFLTG) threads the bilayer. Residues 193–223 (QEDKQNFKLMLRMREIEHQVEEEHLPQRMDF) are Mitochondrial matrix-facing.

This sequence belongs to the TMEM126 family. As to quaternary structure, associates with mitochondrial complex I assembly intermediates during its biogenesis.

Its subcellular location is the mitochondrion membrane. In terms of biological role, as part of the MCIA complex, involved in the assembly of the mitochondrial complex I. The chain is Transmembrane protein 126 from Drosophila melanogaster (Fruit fly).